A 445-amino-acid polypeptide reads, in one-letter code: Exodeoxyribonuclease 7 large subunit (445 aa).

This sequence belongs to the XseA family. Heterooligomer composed of large and small subunits.

It is found in the cytoplasm. The catalysed reaction is Exonucleolytic cleavage in either 5'- to 3'- or 3'- to 5'-direction to yield nucleoside 5'-phosphates.. Functionally, bidirectionally degrades single-stranded DNA into large acid-insoluble oligonucleotides, which are then degraded further into small acid-soluble oligonucleotides. The polypeptide is Exodeoxyribonuclease 7 large subunit (Shewanella oneidensis (strain ATCC 700550 / JCM 31522 / CIP 106686 / LMG 19005 / NCIMB 14063 / MR-1)).